The following is a 61-amino-acid chain: Short neurotoxin 1 (61 aa).

Cystine bridges form between cysteine 3-cysteine 23, cysteine 17-cysteine 40, cysteine 42-cysteine 53, and cysteine 54-cysteine 59.

Belongs to the three-finger toxin family. Short-chain subfamily. Type I alpha-neurotoxin sub-subfamily. In terms of tissue distribution, expressed by the venom gland.

The protein localises to the secreted. In terms of biological role, binds to muscle nicotinic acetylcholine receptor (nAChR) and inhibit acetylcholine from binding to the receptor, thereby impairing neuromuscular transmission. Produces peripheral paralysis by blocking neuromuscular transmission at the postsynaptic site. Binds to the muscular nicotinic acetylcholine receptor. This chain is Short neurotoxin 1, found in Naja annulifera (Banded Egyptian cobra).